A 340-amino-acid polypeptide reads, in one-letter code: Phenylalanine--tRNA ligase alpha subunit (340 aa).

Glu255 is a binding site for Mg(2+).

This sequence belongs to the class-II aminoacyl-tRNA synthetase family. Phe-tRNA synthetase alpha subunit type 1 subfamily. In terms of assembly, tetramer of two alpha and two beta subunits. It depends on Mg(2+) as a cofactor.

It localises to the cytoplasm. It carries out the reaction tRNA(Phe) + L-phenylalanine + ATP = L-phenylalanyl-tRNA(Phe) + AMP + diphosphate + H(+). The chain is Phenylalanine--tRNA ligase alpha subunit from Desulfitobacterium hafniense (strain DSM 10664 / DCB-2).